The following is a 989-amino-acid chain: Phosphoenolpyruvate carboxylase (989 aa).

Active-site residues include H175 and K630.

Belongs to the PEPCase type 1 family. It depends on Mg(2+) as a cofactor.

The enzyme catalyses oxaloacetate + phosphate = phosphoenolpyruvate + hydrogencarbonate. Functionally, forms oxaloacetate, a four-carbon dicarboxylic acid source for the tricarboxylic acid cycle. This Prochlorococcus marinus (strain AS9601) protein is Phosphoenolpyruvate carboxylase.